A 446-amino-acid chain; its full sequence is Phosphoglucosamine mutase (446 aa).

Ser-100 acts as the Phosphoserine intermediate in catalysis. Ser-100, Asp-239, Asp-241, and Asp-243 together coordinate Mg(2+). Ser-100 carries the post-translational modification Phosphoserine.

It belongs to the phosphohexose mutase family. Mg(2+) serves as cofactor. Post-translationally, activated by phosphorylation.

The enzyme catalyses alpha-D-glucosamine 1-phosphate = D-glucosamine 6-phosphate. Functionally, catalyzes the conversion of glucosamine-6-phosphate to glucosamine-1-phosphate. This Shouchella clausii (strain KSM-K16) (Alkalihalobacillus clausii) protein is Phosphoglucosamine mutase.